The following is a 70-amino-acid chain: Large ribosomal subunit protein uL29 (70 aa).

The protein belongs to the universal ribosomal protein uL29 family.

The polypeptide is Large ribosomal subunit protein uL29 (Clostridium botulinum (strain ATCC 19397 / Type A)).